A 468-amino-acid polypeptide reads, in one-letter code: UDP-N-acetylmuramoyl-L-alanine--L-glutamate ligase (468 aa).

Residue 122-128 (GTKGKST) coordinates ATP.

The protein belongs to the MurCDEF family. MurD2 subfamily.

It localises to the cytoplasm. It catalyses the reaction UDP-N-acetyl-alpha-D-muramoyl-L-alanine + L-glutamate + ATP = UDP-N-acetyl-alpha-D-muramoyl-L-alanyl-L-glutamate + ADP + phosphate + H(+). It participates in cell wall biogenesis; peptidoglycan biosynthesis. Its function is as follows. Cell wall formation. Catalyzes the addition of L-glutamate to the nucleotide precursor UDP-N-acetylmuramoyl-L-alanine. Has weak activity with D-glutamate. The sequence is that of UDP-N-acetylmuramoyl-L-alanine--L-glutamate ligase from Xanthomonas oryzae pv. oryzae (strain MAFF 311018).